The primary structure comprises 145 residues: Ribosome-binding factor A (145 aa).

Residues Lys122–Arg132 are compositionally biased toward basic and acidic residues. A disordered region spans residues Lys122–Asp145.

Belongs to the RbfA family. As to quaternary structure, monomer. Binds 30S ribosomal subunits, but not 50S ribosomal subunits or 70S ribosomes.

Its subcellular location is the cytoplasm. In terms of biological role, one of several proteins that assist in the late maturation steps of the functional core of the 30S ribosomal subunit. Associates with free 30S ribosomal subunits (but not with 30S subunits that are part of 70S ribosomes or polysomes). Required for efficient processing of 16S rRNA. May interact with the 5'-terminal helix region of 16S rRNA. The chain is Ribosome-binding factor A from Methylorubrum extorquens (strain PA1) (Methylobacterium extorquens).